The chain runs to 428 residues: Histidinol dehydrogenase homolog (428 aa).

Zn(2+)-binding residues include Gln250 and His253. Active-site proton acceptor residues include Glu320 and His321. Positions 354 and 413 each coordinate Zn(2+).

Belongs to the histidinol dehydrogenase family. Zn(2+) serves as cofactor.

The sequence is that of Histidinol dehydrogenase homolog from Pelagibacter ubique (strain HTCC1062).